A 205-amino-acid chain; its full sequence is Probable GTP-binding protein EngB (205 aa).

The 175-residue stretch at 27–201 (SGIEIAFAGR…AAKLDSWFAP (175 aa)) folds into the EngB-type G domain. Residues 35-42 (GRSNAGKS), 62-66 (GRTQL), 80-83 (DLPG), 147-150 (TKAD), and 180-182 (FSA) contribute to the GTP site. Mg(2+) contacts are provided by Ser-42 and Thr-64.

Belongs to the TRAFAC class TrmE-Era-EngA-EngB-Septin-like GTPase superfamily. EngB GTPase family. Requires Mg(2+) as cofactor.

Functionally, necessary for normal cell division and for the maintenance of normal septation. This chain is Probable GTP-binding protein EngB, found in Pasteurella multocida (strain Pm70).